We begin with the raw amino-acid sequence, 128 residues long: Large ribosomal subunit protein bL12 (128 aa).

It belongs to the bacterial ribosomal protein bL12 family. Homodimer. Part of the ribosomal stalk of the 50S ribosomal subunit. Forms a multimeric L10(L12)X complex, where L10 forms an elongated spine to which 2 to 4 L12 dimers bind in a sequential fashion. Binds GTP-bound translation factors.

Functionally, forms part of the ribosomal stalk which helps the ribosome interact with GTP-bound translation factors. Is thus essential for accurate translation. In Trichormus variabilis (strain ATCC 29413 / PCC 7937) (Anabaena variabilis), this protein is Large ribosomal subunit protein bL12.